The following is a 106-amino-acid chain: NADH dehydrogenase [ubiquinone] 1 beta subcomplex subunit 9 (106 aa).

It belongs to the complex I LYR family. As to quaternary structure, complex I is composed of about 45 different subunits.

It localises to the mitochondrion inner membrane. Functionally, accessory subunit of the mitochondrial membrane respiratory chain NADH dehydrogenase (Complex I), that is believed to be not involved in catalysis. Complex I functions in the transfer of electrons from NADH to the respiratory chain. The immediate electron acceptor for the enzyme is believed to be ubiquinone. The chain is NADH dehydrogenase [ubiquinone] 1 beta subcomplex subunit 9 (ndufb9) from Dictyostelium discoideum (Social amoeba).